The following is a 271-amino-acid chain: ATP synthase subunit a (271 aa).

The next 5 membrane-spanning stretches (helical) occupy residues Thr40–Phe60, Leu100–Leu120, Asp146–Ile166, Leu220–Pro240, and Ala242–Val262.

The protein belongs to the ATPase A chain family. F-type ATPases have 2 components, CF(1) - the catalytic core - and CF(0) - the membrane proton channel. CF(1) has five subunits: alpha(3), beta(3), gamma(1), delta(1), epsilon(1). CF(0) has three main subunits: a(1), b(2) and c(9-12). The alpha and beta chains form an alternating ring which encloses part of the gamma chain. CF(1) is attached to CF(0) by a central stalk formed by the gamma and epsilon chains, while a peripheral stalk is formed by the delta and b chains.

It is found in the cell inner membrane. Its function is as follows. Key component of the proton channel; it plays a direct role in the translocation of protons across the membrane. This Shigella flexneri protein is ATP synthase subunit a.